The chain runs to 212 residues: Large ribosomal subunit protein uL3 (212 aa).

Position 153 is an N5-methylglutamine (Gln-153).

This sequence belongs to the universal ribosomal protein uL3 family. Part of the 50S ribosomal subunit. Forms a cluster with proteins L14 and L19. In terms of processing, methylated by PrmB.

One of the primary rRNA binding proteins, it binds directly near the 3'-end of the 23S rRNA, where it nucleates assembly of the 50S subunit. The polypeptide is Large ribosomal subunit protein uL3 (Shewanella frigidimarina (strain NCIMB 400)).